Here is a 449-residue protein sequence, read N- to C-terminus: tRNA-2-methylthio-N(6)-dimethylallyladenosine synthase (449 aa).

The region spanning 2-119 (KGLFIRTYGC…LPEMIARASR (118 aa)) is the MTTase N-terminal domain. [4Fe-4S] cluster-binding residues include C11, C47, C82, C157, C161, and C164. The Radical SAM core domain maps to 143-378 (EADGPAAFVS…QALLREQQTE (236 aa)). Residues 381–443 (ASQIGKTLPV…LNSLTGELVR (63 aa)) enclose the TRAM domain.

Belongs to the methylthiotransferase family. MiaB subfamily. Monomer. [4Fe-4S] cluster is required as a cofactor.

It is found in the cytoplasm. The enzyme catalyses N(6)-dimethylallyladenosine(37) in tRNA + (sulfur carrier)-SH + AH2 + 2 S-adenosyl-L-methionine = 2-methylsulfanyl-N(6)-dimethylallyladenosine(37) in tRNA + (sulfur carrier)-H + 5'-deoxyadenosine + L-methionine + A + S-adenosyl-L-homocysteine + 2 H(+). Functionally, catalyzes the methylthiolation of N6-(dimethylallyl)adenosine (i(6)A), leading to the formation of 2-methylthio-N6-(dimethylallyl)adenosine (ms(2)i(6)A) at position 37 in tRNAs that read codons beginning with uridine. This is tRNA-2-methylthio-N(6)-dimethylallyladenosine synthase from Hyphomonas neptunium (strain ATCC 15444).